The primary structure comprises 244 residues: Adenosylcobinamide-GDP ribazoletransferase (244 aa).

Transmembrane regions (helical) follow at residues 33 to 53 (WFAV…WLGA), 57 to 77 (PWLA…GLHL), 109 to 129 (FAVI…MLAV), 132 to 152 (GVGW…AVWW), and 176 to 196 (FWLS…VLLL).

This sequence belongs to the CobS family. Mg(2+) is required as a cofactor.

It is found in the cell inner membrane. It carries out the reaction alpha-ribazole + adenosylcob(III)inamide-GDP = adenosylcob(III)alamin + GMP + H(+). It catalyses the reaction alpha-ribazole 5'-phosphate + adenosylcob(III)inamide-GDP = adenosylcob(III)alamin 5'-phosphate + GMP + H(+). It participates in cofactor biosynthesis; adenosylcobalamin biosynthesis; adenosylcobalamin from cob(II)yrinate a,c-diamide: step 7/7. Functionally, joins adenosylcobinamide-GDP and alpha-ribazole to generate adenosylcobalamin (Ado-cobalamin). Also synthesizes adenosylcobalamin 5'-phosphate from adenosylcobinamide-GDP and alpha-ribazole 5'-phosphate. In Laribacter hongkongensis (strain HLHK9), this protein is Adenosylcobinamide-GDP ribazoletransferase.